Consider the following 485-residue polypeptide: Glutamyl-tRNA(Gln) amidotransferase subunit A (485 aa).

Active-site charge relay system residues include Lys-79 and Ser-154. Ser-178 serves as the catalytic Acyl-ester intermediate.

The protein belongs to the amidase family. GatA subfamily. As to quaternary structure, heterotrimer of A, B and C subunits.

The enzyme catalyses L-glutamyl-tRNA(Gln) + L-glutamine + ATP + H2O = L-glutaminyl-tRNA(Gln) + L-glutamate + ADP + phosphate + H(+). In terms of biological role, allows the formation of correctly charged Gln-tRNA(Gln) through the transamidation of misacylated Glu-tRNA(Gln) in organisms which lack glutaminyl-tRNA synthetase. The reaction takes place in the presence of glutamine and ATP through an activated gamma-phospho-Glu-tRNA(Gln). The sequence is that of Glutamyl-tRNA(Gln) amidotransferase subunit A from Staphylococcus aureus (strain USA300 / TCH1516).